We begin with the raw amino-acid sequence, 506 residues long: (+)-vincadifformine 19-hydroxylase (506 aa).

Over 1–4 (MELD) the chain is Lumenal. The chain crosses the membrane as a helical span at residues 5 to 25 (ECSPSIFIISFIFIAISIAIL). Topologically, residues 26 to 506 (RRIRPKKTKA…DLHLIPTSYM (481 aa)) are cytoplasmic. Residue C450 participates in heme binding.

This sequence belongs to the cytochrome P450 family. Heme serves as cofactor. Accumulates progressively in roots.

Its subcellular location is the endoplasmic reticulum membrane. It carries out the reaction (+)-vincadifformine + reduced [NADPH--hemoprotein reductase] + O2 = (+)-minovincinine + oxidized [NADPH--hemoprotein reductase] + H2O + H(+). Its pathway is alkaloid biosynthesis. Its activity is regulated as follows. The enantiomer (-)-vincadifformine acts as a competitive inhibitor. Functionally, component of the monoterpenoid indole alkaloids (MIAs, e.g. echitovenine, tabersonine, lochnericine, 19-hydroxytabersonine and horhammericine) biosynthetic pathway; MIAs are used in cancer treatment and other medical applications. Cytochrome P450 catalyzing the hydroxylation of (+)-vincadifformine to (+)-minovincinine. The protein is (+)-vincadifformine 19-hydroxylase of Catharanthus roseus (Madagascar periwinkle).